The following is a 329-amino-acid chain: GTPase Obg (329 aa).

The Obg domain maps to Met1–Leu159. Residues Ala160–Gly328 form the OBG-type G domain. ATP contacts are provided by residues Gly166 to Ser173, Phe191 to Ile195, Asp213 to Gly216, Asn280 to Glu283, and Ser309 to Val311. Ser173 and Thr193 together coordinate Mg(2+).

It belongs to the TRAFAC class OBG-HflX-like GTPase superfamily. OBG GTPase family. Monomer. Requires Mg(2+) as cofactor.

Its subcellular location is the cytoplasm. An essential GTPase which binds GTP, GDP and possibly (p)ppGpp with moderate affinity, with high nucleotide exchange rates and a fairly low GTP hydrolysis rate. Plays a role in control of the cell cycle, stress response, ribosome biogenesis and in those bacteria that undergo differentiation, in morphogenesis control. The sequence is that of GTPase Obg from Prochlorococcus marinus (strain NATL1A).